A 658-amino-acid polypeptide reads, in one-letter code: MSNTVSLQFPDGSVREYDASMTGAALAESISKSLAKKAVAYAVDGTVRDLSDPLGASGKVEIITREDPRALELIRHDTAHVLAEAVQELFPGTQVTIGPVIENGFYYDFARNEPFTLDDLPVIEKKMREIIQRNKPFTKEVWSREKAKQVFSDKGESYKVELVDAIPAGQDLKIYYQGDWFDLCRGPHMASTGQIGNSFKLMKVAGAYWRGDANNPMLTRIYGTAFANDNDLQAYLHMLEEAEKRDHRRLGREMDLFHFQEEGPGVVFWHAKGWKMFQNLVSYMRRRLDSHGYQEVNTPQVLDKSLWETSGHWGWYRDNMFKVTVAGDDTDDDRVFALKPMNCPGHVQIFKHGLKSYRDLPIKLAEFGNVHRYEPSGALHGLMRVRGFTQDDAHIFCTEEQMAAECLQINDHILSVYKDFGFEEITIKLSTRPEKRVGSDELWDRAESVMMTVLEQIRQQSNNIKTGILPGEGAFYGPKFEYTLKDAIGREWQCGTTQVDFNLPERFGAFYIGADSEKKQPVMIHRAICGSMERFLGILIENFAGHMPLWFAPVQVVVATITSDADEYAKEAAAKLKAAGLQVVTDLRNEKINYKVREHSLQKVPVILVCGKREAEEKTVNMRRLGSRDQESMTLDEAIARLCEEATPPDLLRLKNAG.

One can recognise a TGS domain in the interval methionine 1–threonine 64. Residues aspartate 246–proline 548 form a catalytic region. Positions 343, 394, and 525 each coordinate Zn(2+).

This sequence belongs to the class-II aminoacyl-tRNA synthetase family. Homodimer. Zn(2+) is required as a cofactor.

The protein localises to the cytoplasm. The catalysed reaction is tRNA(Thr) + L-threonine + ATP = L-threonyl-tRNA(Thr) + AMP + diphosphate + H(+). Catalyzes the attachment of threonine to tRNA(Thr) in a two-step reaction: L-threonine is first activated by ATP to form Thr-AMP and then transferred to the acceptor end of tRNA(Thr). Also edits incorrectly charged L-seryl-tRNA(Thr). The protein is Threonine--tRNA ligase of Brucella melitensis biotype 2 (strain ATCC 23457).